We begin with the raw amino-acid sequence, 297 residues long: UPF0761 membrane protein VC0395_A2314/VC395_2854 (297 aa).

Helical transmembrane passes span 43–63 (LLSMVPMLTVLLSILSSFALF), 100–120 (MTAVGGAFLFVAAIMLISNID), 135–155 (AVFSFSMYWMILTLGPILVGA), 181–201 (FLRWLPFVLSYCAFVGLYLLV), 213–233 (LGALIAAILFELSKKGFAAYI), and 245–265 (ALAAIPILFVWVYLCWLIVLV).

It belongs to the UPF0761 family.

It localises to the cell inner membrane. The chain is UPF0761 membrane protein VC0395_A2314/VC395_2854 from Vibrio cholerae serotype O1 (strain ATCC 39541 / Classical Ogawa 395 / O395).